Consider the following 271-residue polypeptide: 5-deoxy-glucuronate isomerase (271 aa).

It belongs to the isomerase IolB family.

It carries out the reaction 5-deoxy-D-glucuronate = 5-dehydro-2-deoxy-D-gluconate. It functions in the pathway polyol metabolism; myo-inositol degradation into acetyl-CoA; acetyl-CoA from myo-inositol: step 4/7. Its function is as follows. Involved in the isomerization of 5-deoxy-glucuronate (5DG) to 5-dehydro-2-deoxy-D-gluconate (DKG or 2-deoxy-5-keto-D-gluconate). The sequence is that of 5-deoxy-glucuronate isomerase from Bacillus subtilis subsp. natto.